Consider the following 1086-residue polypeptide: MIGVYLRSVIFPLLFVIQTICQPPGNVFHLGFLHCDVLENNVEGSTTYINYRTSASAASIAIDKIKREGLLLGYDFKFTILYDQCDENIAAGNAIKLFAEHNVDVLFGPTTNNAAMPVFILATYYNIPLITWGITSSATLDDESRFPTAGMLSIGSRSLAVTFREVMKEYGWDQFVFAYSLEMNDEKCETLRDDFQNMVAYYGDIVLSYAVQIMDHSEEGLLAILKDVSTRGRIIVPCFHEGNSRGLHRRWMLVAARNGFVNDEYVYIFPSLRSRGYAVPQADGTFRYPWTEATGPQPGDQEALLGFQKSIFIVDMQGQGNVGSNYTQFEHEIIQRMKEPPYNCTDACASPEYQTAATYAGQLHDSVYIYGVVMDQIMKTVPNQYKNGTAFPRKMAGVFNGVGGTVAIDEGGGLQPTLFVLTLDSNNNSSLIMTVDVDQQEAVVTKHYTNEATALWSHRKGIRPPDQPICGYTGSLCPANVFFQYIGWFIAAIIIIFFTIMGAILAFIYLCHAKQQEVERQNALWQIPFKSMMTVTKKGKGEHSMRSISSVPSTISSTRSSTLSEVGETRNYLFFQIQNDVEMERVAAKKHSIRMVFDNKTCATMRQMRLIDHANLNKFIGMSLDAPQLYSVWRFCSRGSLADVIRKASMQMDGFFIYSLMKDIINGLTWIHESSHEFHGMLTSKNCLLNDRWQLKITDFGLRIFRTHDQYNKSDRLWTSPELLRTDDILGSREGDIYSFGIISAELITRSSVFDLENRKEDAEEIIYMLKKGGLQSPRPSLEHDESIEINPALLHLVRDCWTERPSERPDIKQVASQLRSMNTNRNDNLMDHVFNVLESYASTLEDEVAERMKELVEEKKKSDVLLYRMLPRQVADKLKLGQTVEPETFDIVTLFFSDVVSFTTLAGKCTPLQVVNLLNGLYTIFDGIIEQHDVYKVETIGDGYFVASGVPRRNGNEHTRNIASMSINFVKSLADFSIPHLPGEKIKIRVGFHCGSVVAGVVGLTMPRYCLFGDAVNTASRMESNSKPGQIHLSEEANQMLMRLGGFTTEPRGEVIIKGKGVMATYWLLKMDESAAPKILKKKQD.

The first 21 residues, 1–21 (MIGVYLRSVIFPLLFVIQTIC), serve as a signal peptide directing secretion. The Extracellular portion of the chain corresponds to 22 to 487 (QPPGNVFHLG…PANVFFQYIG (466 aa)). 4 N-linked (GlcNAc...) asparagine glycosylation sites follow: Asn325, Asn343, Asn387, and Asn427. The helical transmembrane segment at 488 to 508 (WFIAAIIIIFFTIMGAILAFI) threads the bilayer. Topologically, residues 509 to 1086 (YLCHAKQQEV…APKILKKKQD (578 aa)) are cytoplasmic. A Protein kinase domain is found at 560-836 (SSTLSEVGET…NDNLMDHVFN (277 aa)). ATP is bound by residues 566–574 (VGETRNYLF) and Lys589. Residues 894 to 1024 (TLFFSDVVSF…DAVNTASRME (131 aa)) form the Guanylate cyclase domain.

Belongs to the adenylyl cyclase class-4/guanylyl cyclase family. Expressed in both ASEL and ASER neurons throughout late embryonic and early larval stages. In adults, expressed asymmetrically in ASE left (ASEL) sensory neuron.

The protein resides in the cell membrane. It catalyses the reaction GTP = 3',5'-cyclic GMP + diphosphate. In terms of biological role, guanylate cyclase involved in the production of the second messenger cGMP. Regulates chemotaxis responses toward the salt ion Mg(2+) and to a lesser extent toward Cl(1-) in ASE left (ASEL) sensory neuron. The polypeptide is Receptor-type guanylate cyclase gcy-6 (Caenorhabditis elegans).